A 303-amino-acid polypeptide reads, in one-letter code: Glutaminase (303 aa).

Residues Ser63, Asn113, Glu157, Asn164, Tyr188, Tyr239, and Val257 each coordinate substrate.

The protein belongs to the glutaminase family. In terms of assembly, homotetramer.

It catalyses the reaction L-glutamine + H2O = L-glutamate + NH4(+). The polypeptide is Glutaminase (Saccharopolyspora erythraea (strain ATCC 11635 / DSM 40517 / JCM 4748 / NBRC 13426 / NCIMB 8594 / NRRL 2338)).